The following is a 308-amino-acid chain: KH domain-containing protein At4g26480 (308 aa).

A disordered region spans residues 1–26; that stretch reads MMMMTSLGGGAGGGGGGGGSGGGRFV. Residues 7 to 24 show a composition bias toward gly residues; that stretch reads LGGGAGGGGGGGGSGGGR. Residues 165–232 form the KH domain; it reads DIPVDKYPNY…EHLNEPLHIL (68 aa). Residues 284–308 form a disordered region; that stretch reads EEGSPMSGSISPYNSLGMKRAKTRG. S294 is modified (phosphoserine).

It localises to the nucleus. In Arabidopsis thaliana (Mouse-ear cress), this protein is KH domain-containing protein At4g26480.